We begin with the raw amino-acid sequence, 259 residues long: Global transcriptional regulator CodY (259 aa).

Residues M1–L155 form a GAF domain region. A DNA-binding region (H-T-H motif) is located at residues A203 to R222. S215 carries the post-translational modification Phosphoserine.

This sequence belongs to the CodY family.

It is found in the cytoplasm. DNA-binding global transcriptional regulator which is involved in the adaptive response to starvation and acts by directly or indirectly controlling the expression of numerous genes in response to nutrient availability. During rapid exponential growth, CodY is highly active and represses genes whose products allow adaptation to nutrient depletion. The chain is Global transcriptional regulator CodY from Bacillus licheniformis (strain ATCC 14580 / DSM 13 / JCM 2505 / CCUG 7422 / NBRC 12200 / NCIMB 9375 / NCTC 10341 / NRRL NRS-1264 / Gibson 46).